Here is a 90-residue protein sequence, read N- to C-terminus: uncharacterized protein (90 aa).

The tract at residues 1–26 (MFKRSVSRLFCAPAPAPAPRKQPGGR) is disordered. Residues 33–66 (NLNQSVKKQLNHLEVLERIKKQRKEQKNNRNQVD) adopt a coiled-coil conformation.

This is an uncharacterized protein from Dictyostelium discoideum (Social amoeba).